The sequence spans 582 residues: 2-(3-amino-3-carboxypropyl)histidine synthase subunit 2 (582 aa).

The [4Fe-4S] cluster site is built by cysteine 135, cysteine 156, and cysteine 373. The segment at 416 to 467 (SILDQPPPSSNSPGNSQEANEGPEFGDHARDEDEDAMSEPESAPPEFDLRTG) is disordered.

This sequence belongs to the DPH1/DPH2 family. DPH2 subfamily. As to quaternary structure, component of the 2-(3-amino-3-carboxypropyl)histidine synthase complex composed of dph1, dph2, dph3 and a NADH-dependent reductase, predominantly cbr1. Requires [4Fe-4S] cluster as cofactor.

It is found in the cytoplasm. Its pathway is protein modification; peptidyl-diphthamide biosynthesis. In terms of biological role, required for the first step of diphthamide biosynthesis, a post-translational modification of histidine which occurs in elongation factor 2. Dph1 and dph2 transfer a 3-amino-3-carboxypropyl (ACP) group from S-adenosyl-L-methionine (SAM) to a histidine residue, the reaction is assisted by a reduction system comprising dph3 and a NADH-dependent reductase, predominantly cbr1. Facilitates the reduction of the catalytic iron-sulfur cluster found in the dph1 subunit. The protein is 2-(3-amino-3-carboxypropyl)histidine synthase subunit 2 (dph2) of Emericella nidulans (strain FGSC A4 / ATCC 38163 / CBS 112.46 / NRRL 194 / M139) (Aspergillus nidulans).